The following is a 148-amino-acid chain: Calcium-regulated heat stable protein 1 (148 aa).

Residues 1 to 12 (MSSEPPPPPLQP) show a composition bias toward pro residues. A disordered region spans residues 1 to 47 (MSSEPPPPPLQPPTHQTSVGLLDTPRTRDRSPSPLRGNVVPSPLPTR). Ser-2 is modified (N-acetylserine). A phosphoserine mark is found at Ser-31, Ser-33, and Ser-42. Residue Thr-46 is modified to Phosphothreonine. Phosphoserine occurs at positions 53 and 59. The region spanning 63 to 130 (VYKGVCKCFC…KLQAVEVVIT (68 aa)) is the CSD domain. Residue Ser-147 is modified to Phosphoserine.

In terms of assembly, homodimer. Interacts with STYX. Post-translationally, can be phosphorylated by DYRK2 (in vitro). Dephosphorylated by calcineurin in a Ca(2+) dependent manner.

It localises to the cytoplasm. Its subcellular location is the P-body. The protein localises to the cytoplasmic granule. In terms of biological role, binds mRNA and regulates the stability of target mRNA. The sequence is that of Calcium-regulated heat stable protein 1 (Carhsp1) from Mus musculus (Mouse).